We begin with the raw amino-acid sequence, 269 residues long: MKNNHTSLKSPLDEEDELKTDHEIDLEKGPLPEYDSEEESTLPPYSDHALVNNPPNTHRENHSYRTTDNSSPLLIKLLISFTSIILFNAPAVCYLKYKDAFFKNYGAAEWTLFGFWCLVCTLALIFLTYFYETWTKAVKVTVISLAKCVKVTAIFLAQCVKACGKGIKHFLKKWENMPMAFSEVFLFNILVGSPRMNLRYIFGDRWGLKCSLADHIIFVVLSILVFIAETVKPGSIRVNLIRKMGYEAKQQVNEYTAVPLREMNPESEA.

The tract at residues 1–67 (MKNNHTSLKS…HRENHSYRTT (67 aa)) is disordered. Residues 19 to 30 (KTDHEIDLEKGP) are compositionally biased toward basic and acidic residues. The next 5 membrane-spanning stretches (helical) occupy residues 73 to 93 (LLIK…PAVC), 110 to 130 (WTLF…LTYF), 140 to 160 (VTVI…AQCV), 174 to 194 (WENM…VGSP), and 216 to 236 (IIFV…PGSI).

The protein belongs to the WTF family. In terms of assembly, homomer. Interacts with other proteins that exhibit high sequence similarity.

The protein resides in the spore membrane. It is found in the vacuole membrane. Acts as a suppressor component of the dual wtf meiotic drive system, and can suppress but not confer meiotic drive by compatible poisons. Wtf meiotic drive systems promote unequal transmission of alleles from the parental zygote to progeny spores by encoding a poison and an antidote from the same locus; the poison is trans-acting and forms toxic aggregates in all spores within an ascus, wherease the antidote is spore-specific and targets aggregates for degradation by the vacuole. Meiotic drive by wtf systems therefore lead to poisoning of all progeny that do not inherit the dual poison/antidote allele, or express a compatible antidote. The polypeptide is Meiotic drive suppressor wtf5 (Schizosaccharomyces kambucha (Fission yeast)).